Consider the following 968-residue polypeptide: Phosphoenolpyruvate carboxylase (968 aa).

The residue at position 11 (Ser11) is a Phosphoserine. Residues His172 and Lys602 contribute to the active site.

The protein belongs to the PEPCase type 1 family. Homotetramer. Requires Mg(2+) as cofactor.

The protein localises to the cytoplasm. It carries out the reaction oxaloacetate + phosphate = phosphoenolpyruvate + hydrogencarbonate. Its activity is regulated as follows. By light-reversible phosphorylation. Functionally, through the carboxylation of phosphoenolpyruvate (PEP) it forms oxaloacetate, a four-carbon dicarboxylic acid source for the tricarboxylic acid cycle. In Phaseolus vulgaris (Kidney bean), this protein is Phosphoenolpyruvate carboxylase.